The following is a 72-amino-acid chain: DNA-directed RNA polymerase subunit epsilon (72 aa).

This sequence belongs to the RNA polymerase subunit epsilon family. In terms of assembly, RNAP is composed of a core of 2 alpha, a beta and a beta' subunit. The core is associated with a delta subunit, and at least one of epsilon or omega. When a sigma factor is associated with the core the holoenzyme is formed, which can initiate transcription.

The enzyme catalyses RNA(n) + a ribonucleoside 5'-triphosphate = RNA(n+1) + diphosphate. Functionally, a non-essential component of RNA polymerase (RNAP). This Staphylococcus aureus (strain JH1) protein is DNA-directed RNA polymerase subunit epsilon.